The sequence spans 310 residues: 1-aminocyclopropane-1-carboxylate oxidase 1 (310 aa).

Residues glutamate 113–leucine 133 are a coiled coil. One can recognise a Fe2OG dioxygenase domain in the interval proline 158–proline 259. Histidine 182, aspartate 184, and histidine 240 together coordinate Fe cation. Arginine 250 is a binding site for 2-oxoglutarate.

This sequence belongs to the iron/ascorbate-dependent oxidoreductase family. Fe(2+) is required as a cofactor.

It catalyses the reaction 1-aminocyclopropane-1-carboxylate + L-ascorbate + O2 = ethene + L-dehydroascorbate + hydrogen cyanide + CO2 + 2 H2O. The protein operates within alkene biosynthesis; ethylene biosynthesis via S-adenosyl-L-methionine; ethylene from S-adenosyl-L-methionine: step 2/2. Functionally, enzyme involved in the ethylene biosynthesis. May promote stem elongation by maximizing the extensibility cells, possibly by activating ethylene biosynthesis, in response to very-long-chain fatty acids (VLCFAs C20:0 to C30:0). This Arabidopsis thaliana (Mouse-ear cress) protein is 1-aminocyclopropane-1-carboxylate oxidase 1 (ACO1).